The following is a 317-amino-acid chain: MPVQGSQRRLLGSLNSTPTATPHLGLAANQTGARCLEVSIPDGLFLSLGLVSLVENVLVVTAIAKNRNLHSPMYCFICCLALSDLLVSGSNMLETAVILLLEAGALAARAAVVQQLDNVIDVITCSSMLSSLCFLGAIAVDRYISIFYALRYHSIVTLPRARRAVAAIWVASVLFSMLFIAYYDHAAVLLCLVVFFLAMLVLMAVLYVHMLARACQHAQGIARLHKRQRPAHQSFGLKGAATLTILLGIFFLCWGPFFLHLTLIVLCPQHPTCSCIFKNFNLFLTLIICNAIIDPLIYAFRSQELRRTLKEVLLCSW.

Residues 1–37 (MPVQGSQRRLLGSLNSTPTATPHLGLAANQTGARCLE) are Extracellular-facing. N-linked (GlcNAc...) asparagine glycosylation occurs at N29. Residues 38 to 63 (VSIPDGLFLSLGLVSLVENVLVVTAI) form a helical membrane-spanning segment. The Cytoplasmic segment spans residues 64–72 (AKNRNLHSP). Residues 73–93 (MYCFICCLALSDLLVSGSNML) traverse the membrane as a helical segment. The Extracellular portion of the chain corresponds to 94–118 (ETAVILLLEAGALAARAAVVQQLDN). The chain crosses the membrane as a helical span at residues 119 to 140 (VIDVITCSSMLSSLCFLGAIAV). Residues 141–163 (DRYISIFYALRYHSIVTLPRARR) are Cytoplasmic-facing. A helical membrane pass occupies residues 164–183 (AVAAIWVASVLFSMLFIAYY). Residues 184–191 (DHAAVLLC) are Extracellular-facing. The helical transmembrane segment at 192-211 (LVVFFLAMLVLMAVLYVHML) threads the bilayer. Residues 212 to 240 (ARACQHAQGIARLHKRQRPAHQSFGLKGA) are Cytoplasmic-facing. The chain crosses the membrane as a helical span at residues 241 to 266 (ATLTILLGIFFLCWGPFFLHLTLIVL). The Extracellular segment spans residues 267 to 279 (CPQHPTCSCIFKN). The chain crosses the membrane as a helical span at residues 280 to 300 (FNLFLTLIICNAIIDPLIYAF). Residues 301 to 317 (RSQELRRTLKEVLLCSW) lie on the Cytoplasmic side of the membrane. The S-palmitoyl cysteine moiety is linked to residue C315.

Belongs to the G-protein coupled receptor 1 family. In terms of assembly, interacts with MGRN1, but does not undergo MGRN1-mediated ubiquitination; this interaction competes with GNAS-binding and thus inhibits agonist-induced cAMP production. Interacts with OPN3; the interaction results in a decrease in MC1R-mediated cAMP signaling and ultimately a decrease in melanin production in melanocytes.

Its subcellular location is the cell membrane. Receptor for MSH (alpha, beta and gamma) and ACTH. The activity of this receptor is mediated by G proteins which activate adenylate cyclase. Mediates melanogenesis, the production of eumelanin (black/brown) and phaeomelanin (red/yellow), via regulation of cAMP signaling in melanocytes. The protein is Melanocyte-stimulating hormone receptor (MC1R) of Erythrocebus patas (Red guenon).